The sequence spans 500 residues: Farnesylcysteine lyase (500 aa).

Positions 1-24 are cleaved as a signal peptide; it reads MKDFPIAISLLFALLSPVLLPCSG. 4 N-linked (GlcNAc...) asparagine glycosylation sites follow: N56, N113, N211, and N281.

The protein belongs to the prenylcysteine oxidase family. Requires FAD as cofactor. Expressed in seedilings, flowers, stems, leaves and roots.

It is found in the lysosome. The enzyme catalyses S-(2E,6E)-farnesyl-L-cysteine + O2 + H2O = (2E,6E)-farnesal + L-cysteine + H2O2. Its function is as follows. Involved in the degradation of prenylcysteine. Cleaves specifically the thioether bond of S-farnesyl-L-cysteine and has no activity with S-geranylgeranyl-L-cysteine. Also recognizes N-acetyl-farnesylcysteine and may have a role in deprenylation of farnesylated proteins. In Arabidopsis thaliana (Mouse-ear cress), this protein is Farnesylcysteine lyase.